The following is a 192-amino-acid chain: UPF0301 protein BTH_I1462 (192 aa).

Belongs to the UPF0301 (AlgH) family.

This chain is UPF0301 protein BTH_I1462, found in Burkholderia thailandensis (strain ATCC 700388 / DSM 13276 / CCUG 48851 / CIP 106301 / E264).